Reading from the N-terminus, the 46-residue chain is Cytochrome b559 subunit beta (46 aa).

A helical transmembrane segment spans residues Trp-21–Ala-37. Heme is bound at residue His-25.

Belongs to the PsbE/PsbF family. Heterodimer of an alpha subunit and a beta subunit. PSII is composed of 1 copy each of membrane proteins PsbA, PsbB, PsbC, PsbD, PsbE, PsbF, PsbH, PsbI, PsbJ, PsbK, PsbL, PsbM, PsbT, PsbX, PsbY, PsbZ, Psb30/Ycf12, peripheral proteins PsbO, CyanoQ (PsbQ), PsbU, PsbV and a large number of cofactors. It forms dimeric complexes. Requires heme b as cofactor.

Its subcellular location is the cellular thylakoid membrane. Functionally, this b-type cytochrome is tightly associated with the reaction center of photosystem II (PSII). PSII is a light-driven water:plastoquinone oxidoreductase that uses light energy to abstract electrons from H(2)O, generating O(2) and a proton gradient subsequently used for ATP formation. It consists of a core antenna complex that captures photons, and an electron transfer chain that converts photonic excitation into a charge separation. This chain is Cytochrome b559 subunit beta, found in Synechococcus sp. (strain CC9605).